The following is a 179-amino-acid chain: MINKNEWLTVGLITSCHGINGQVKVKSLSDFEERFLKPGMRWLQKENEPPSKIELISGFKQPGKETFIVKLQGINTRNDAEQLKTFKILVRTDKLPKLKKEEFHLLELINLEVKTLENDELKTIGKVINLENEKNNLLIIELFKNQKKVLIPFVKEIVPLVDIKNQFVIINPPNGLLEL.

Positions 100–176 (KEEFHLLELI…FVIINPPNGL (77 aa)) constitute a PRC barrel domain.

Belongs to the RimM family. Binds ribosomal protein uS19.

It localises to the cytoplasm. An accessory protein needed during the final step in the assembly of 30S ribosomal subunit, possibly for assembly of the head region. Essential for efficient processing of 16S rRNA. May be needed both before and after RbfA during the maturation of 16S rRNA. It has affinity for free ribosomal 30S subunits but not for 70S ribosomes. The sequence is that of Ribosome maturation factor RimM from Prochlorococcus marinus (strain MIT 9301).